Consider the following 25-residue polypeptide: XIAGSEEYGKHCFKGAVADAYLAKH.

This sequence belongs to the glutamine synthetase family. Homohexamer.

The protein resides in the plastid. Its subcellular location is the chloroplast. It catalyses the reaction L-glutamate + NH4(+) + ATP = L-glutamine + ADP + phosphate + H(+). In terms of biological role, plays a key role in the nitrogen metabolism of microorganisms, animals and plants. The protein is Glutamine synthetase 2 isozyme of Emiliania huxleyi (Coccolithophore).